The following is a 99-amino-acid chain: Large ribosomal subunit protein P1 (99 aa).

As to quaternary structure, part of the 50S ribosomal subunit. Homodimer, it forms part of the ribosomal stalk which helps the ribosome interact with GTP-bound translation factors. Forms both a pentameric uL10/P0(P1)2(P1)2 and heptameric uL10/P0(P1)2(P1)2(P1)2 complex, where uL10/P0 forms an elongated spine to which the P1 dimers bind in a sequential fashion. The proportion of heptameric complexes increases during cell growth.

Functionally, forms part of the ribosomal stalk, playing a central role in the interaction of the ribosome with GTP-bound translation factors. This chain is Large ribosomal subunit protein P1, found in Methanococcus vannielii.